The primary structure comprises 458 residues: Transmembrane protein adipocyte-associated 1 homolog (458 aa).

Asn21 and Asn45 each carry an N-linked (GlcNAc...) asparagine glycan. The next 7 helical transmembrane spans lie at 81 to 101 (VILV…GSVI), 114 to 134 (AFTL…AYSM), 152 to 172 (IIIK…GLLF), 181 to 201 (ILIA…VQVI), 225 to 245 (FLFW…IMCL), 263 to 283 (LIYC…AALI), and 291 to 311 (LCFV…IIYF). N-linked (GlcNAc...) asparagine glycosylation is found at Asn323 and Asn324. Residues 409 to 458 (RTGSDDYAHHRDSMLSEPSTGTTTRHLKGLGPQGSLVFEDDPSSLTSLRM) form a disordered region. The segment covering 411–422 (GSDDYAHHRDSM) has biased composition (basic and acidic residues).

This sequence belongs to the UPF0359 family.

It localises to the membrane. The sequence is that of Transmembrane protein adipocyte-associated 1 homolog (tpra-1) from Caenorhabditis elegans.